Consider the following 103-residue polypeptide: Large ribosomal subunit protein bL21 (103 aa).

It belongs to the bacterial ribosomal protein bL21 family. Part of the 50S ribosomal subunit. Contacts protein L20.

Functionally, this protein binds to 23S rRNA in the presence of protein L20. In Nitrosomonas europaea (strain ATCC 19718 / CIP 103999 / KCTC 2705 / NBRC 14298), this protein is Large ribosomal subunit protein bL21.